A 157-amino-acid chain; its full sequence is 2-C-methyl-D-erythritol 2,4-cyclodiphosphate synthase (157 aa).

A divalent metal cation-binding residues include Asp-8 and His-10. 4-CDP-2-C-methyl-D-erythritol 2-phosphate contacts are provided by residues Asp-8–His-10 and His-34–Ser-35. His-42 is an a divalent metal cation binding site. 4-CDP-2-C-methyl-D-erythritol 2-phosphate-binding positions include Asp-56–Gly-58, Phe-61–Asp-65, Ala-100–Ala-106, Thr-132–Glu-135, and Phe-139.

Belongs to the IspF family. As to quaternary structure, homotrimer. It depends on a divalent metal cation as a cofactor.

It carries out the reaction 4-CDP-2-C-methyl-D-erythritol 2-phosphate = 2-C-methyl-D-erythritol 2,4-cyclic diphosphate + CMP. It participates in isoprenoid biosynthesis; isopentenyl diphosphate biosynthesis via DXP pathway; isopentenyl diphosphate from 1-deoxy-D-xylulose 5-phosphate: step 4/6. Involved in the biosynthesis of isopentenyl diphosphate (IPP) and dimethylallyl diphosphate (DMAPP), two major building blocks of isoprenoid compounds. Catalyzes the conversion of 4-diphosphocytidyl-2-C-methyl-D-erythritol 2-phosphate (CDP-ME2P) to 2-C-methyl-D-erythritol 2,4-cyclodiphosphate (ME-CPP) with a corresponding release of cytidine 5-monophosphate (CMP). This is 2-C-methyl-D-erythritol 2,4-cyclodiphosphate synthase from Clostridium novyi (strain NT).